Here is a 263-residue protein sequence, read N- to C-terminus: MIILIHTSKAMRPAPQGGATLTVPALRDRAEELATYLKTLSVEQFAAAMELSPELADRTHGLFADWGTEPERQSPAIDSFAGDIYSGLRACDLTPADRAYAEGRLRILSGLYGILRPEDGIQPYRLEMGYRLPDPPYANLYQFWGDAVARCLPRTGVIVDLAAVEYNRIVTRFLSRDRFVSPRFLTINPKTGEPRFVVVHAKIARGAFARWLLAARVEDPADIVDFAEIGYRYEPALSKPRQPAFVCQEFGGKGLSVRRHDLG.

The protein belongs to the UPF0246 family.

The polypeptide is UPF0246 protein Strop_2927 (Salinispora tropica (strain ATCC BAA-916 / DSM 44818 / JCM 13857 / NBRC 105044 / CNB-440)).